A 260-amino-acid polypeptide reads, in one-letter code: MSLESLFQHIIFSEHQAEESRRLMREVRSEINRCREKIKKAAEQLNKEKIQLESKVQQFSEKAFLLQLLKTHENALERQCNEITNQRNMLLQTFEATKRRVTEEEEKFIKEITDFNNEYELTKKRERLMKENVKIQISDLENQANILKMEMKSMEHDSDLLNELQRQKNELIQELSTLQRKLKGFEDKKHEAICTTKYLEAEKIKINEKPQNDAECLRLKKELELYKEDDMQSVHDALQTEIEFLELTLAQKDHQETNNL.

A coiled-coil region spans residues 13 to 194 (SEHQAEESRR…FEDKKHEAIC (182 aa)).

The protein belongs to the CCDC172 family. May interact with TEKT2.

The protein resides in the cytoplasm. Its subcellular location is the cell projection. It is found in the cilium. The polypeptide is Coiled-coil domain-containing protein 172 (CCDC172) (Bos taurus (Bovine)).